Consider the following 341-residue polypeptide: THO complex subunit 6 homolog (341 aa).

WD repeat units follow at residues 22-61 (RLHM…SSEA), 74-112 (AHDG…GCKE), 124-163 (LEVP…FTRA), 166-205 (GHTD…EVQT), 215-254 (SRPH…PTTV), 256-293 (PIRA…KAQV), and 295-339 (GSSP…AFSL). Ser180 is subject to Phosphoserine.

This sequence belongs to the WD repeat THOC6 family. Component of the THO subcomplex, which is composed of THOC1, THOC2, THOC3, THOC5, THOC6 and THOC7. The THO subcomplex interacts with DDX39B to form the THO-DDX39B complex which multimerizes into a 28-subunit tetrameric assembly. Component of the transcription/export (TREX) complex at least composed of ALYREF/THOC4, DDX39B, SARNP/CIP29, CHTOP and the THO subcomplex; in the complex interacts with THOC5; together with THOC5 and THOC7, plays a key structural role in the oligomerization of the THO-DDX39B complex. TREX seems to have a dynamic structure involving ATP-dependent remodeling.

It localises to the nucleus. The protein localises to the nucleus speckle. Its function is as follows. Component of the THO subcomplex of the TREX complex which is thought to couple mRNA transcription, processing and nuclear export, and which specifically associates with spliced mRNA and not with unspliced pre-mRNA. Plays a key structural role in the oligomerization of the THO-DDX39B complex. TREX is recruited to spliced mRNAs by a transcription-independent mechanism, binds to mRNA upstream of the exon-junction complex (EJC) and is recruited in a splicing- and cap-dependent manner to a region near the 5' end of the mRNA where it functions in mRNA export to the cytoplasm via the TAP/NXF1 pathway. Plays a role in apoptosis negative control involved in brain development. The sequence is that of THO complex subunit 6 homolog (Thoc6) from Rattus norvegicus (Rat).